A 347-amino-acid chain; its full sequence is 4-hydroxyproline 2-epimerase (347 aa).

Gln-85 contacts substrate. Ser-93 acts as the Proton acceptor in catalysis. Residues 94 to 95 (GS) and Asp-251 contribute to the substrate site. The Proton donor role is filled by Cys-255. 256–257 (GT) is a substrate binding site.

It belongs to the proline racemase family.

The catalysed reaction is trans-4-hydroxy-L-proline = cis-4-hydroxy-D-proline. Catalyzes the epimerization of trans-4-hydroxy-L-proline (t4LHyp) to cis-4-hydroxy-D-proline (c4DHyp). May be involved in a degradation pathway of t4LHyp. Can also catalyze the epimerization of trans-3-hydroxy-L-proline (t3LHyp) to cis-3-hydroxy-D-proline (c3DHyp) in vitro. Displays no proline racemase activity. This Allorhizobium ampelinum (strain ATCC BAA-846 / DSM 112012 / S4) (Agrobacterium vitis (strain S4)) protein is 4-hydroxyproline 2-epimerase.